The sequence spans 239 residues: 2,3,4,5-tetrahydropyridine-2,6-dicarboxylate N-acetyltransferase (239 aa).

Belongs to the transferase hexapeptide repeat family. DapH subfamily.

It catalyses the reaction (S)-2,3,4,5-tetrahydrodipicolinate + acetyl-CoA + H2O = L-2-acetamido-6-oxoheptanedioate + CoA. The protein operates within amino-acid biosynthesis; L-lysine biosynthesis via DAP pathway; LL-2,6-diaminopimelate from (S)-tetrahydrodipicolinate (acetylase route): step 1/3. Functionally, catalyzes the transfer of an acetyl group from acetyl-CoA to tetrahydrodipicolinate. The chain is 2,3,4,5-tetrahydropyridine-2,6-dicarboxylate N-acetyltransferase from Staphylococcus saprophyticus subsp. saprophyticus (strain ATCC 15305 / DSM 20229 / NCIMB 8711 / NCTC 7292 / S-41).